A 349-amino-acid chain; its full sequence is Anthranilate phosphoribosyltransferase (349 aa).

Residues glycine 82, 85-86, 92-95, 110-118, and serine 122 contribute to the 5-phospho-alpha-D-ribose 1-diphosphate site; these read GD, NVST, and KHGNRAVSG. Glycine 82 is a binding site for anthranilate. Residue serine 94 participates in Mg(2+) binding. Asparagine 113 provides a ligand contact to anthranilate. Arginine 168 is an anthranilate binding site. Mg(2+) contacts are provided by aspartate 227 and glutamate 228.

Belongs to the anthranilate phosphoribosyltransferase family. As to quaternary structure, homodimer. Mg(2+) serves as cofactor.

It catalyses the reaction N-(5-phospho-beta-D-ribosyl)anthranilate + diphosphate = 5-phospho-alpha-D-ribose 1-diphosphate + anthranilate. The protein operates within amino-acid biosynthesis; L-tryptophan biosynthesis; L-tryptophan from chorismate: step 2/5. In terms of biological role, catalyzes the transfer of the phosphoribosyl group of 5-phosphorylribose-1-pyrophosphate (PRPP) to anthranilate to yield N-(5'-phosphoribosyl)-anthranilate (PRA). This chain is Anthranilate phosphoribosyltransferase, found in Pseudomonas putida (Arthrobacter siderocapsulatus).